Consider the following 185-residue polypeptide: NEDD8-conjugating enzyme UBE2F (185 aa).

Met-1 bears the N-acetylmethionine mark. The interaction with UBA3 stretch occupies residues 1–29 (MLTLASKLKRDDGLKGSRASATASDSTRR). A UBC core domain is found at 32–185 (VRDRLLVKEV…VEDYIKRYAR (154 aa)). Cys-116 serves as the catalytic Glycyl thioester intermediate.

Belongs to the ubiquitin-conjugating enzyme family. UBE2F subfamily. Interacts with UBA3 and RBX2. Interacts (N-terminally acetylated form) with (via DCUN1 domain) DCUN1D1, DCUN1D2, DCUN1D3, DCUN1D4 and DCUN1D5. The acetylation of Met-1 increases affinity for DCUN1D3 by about 2 orders of magnitude and is crucial for NEDD8 transfer to cullins.

It carries out the reaction [E1 NEDD8-activating enzyme]-S-[NEDD8 protein]-yl-L-cysteine + [E2 NEDD8-conjugating enzyme]-L-cysteine = [E1 NEDD8-activating enzyme]-L-cysteine + [E2 NEDD8-conjugating enzyme]-S-[NEDD8-protein]-yl-L-cysteine.. It participates in protein modification; protein neddylation. Functionally, accepts the ubiquitin-like protein NEDD8 from the UBA3-NAE1 E1 complex and catalyzes its covalent attachment to other proteins. Together with the E3 ubiquitin ligase RNF7/RBX2, specifically neddylates cullin-5 (CUL5). Does not neddylate CUL1, CUL2, CUL3, CUL4A or CUL4B. Mediates neddylation of the CUL9-RBX1 complex. This chain is NEDD8-conjugating enzyme UBE2F (UBE2F), found in Bos taurus (Bovine).